The following is an 86-amino-acid chain: Acyl carrier protein (86 aa).

Positions 2–82 (ATVFERVKKV…AVVDYLKSKG (81 aa)) constitute a Carrier domain. Ser-37 carries the post-translational modification O-(pantetheine 4'-phosphoryl)serine.

This sequence belongs to the acyl carrier protein (ACP) family. 4'-phosphopantetheine is transferred from CoA to a specific serine of apo-ACP by AcpS. This modification is essential for activity because fatty acids are bound in thioester linkage to the sulfhydryl of the prosthetic group.

The protein resides in the cytoplasm. The protein operates within lipid metabolism; fatty acid biosynthesis. In terms of biological role, carrier of the growing fatty acid chain in fatty acid biosynthesis. The polypeptide is Acyl carrier protein (Dehalococcoides mccartyi (strain ATCC BAA-2266 / KCTC 15142 / 195) (Dehalococcoides ethenogenes (strain 195))).